The primary structure comprises 269 residues: Indole-3-glycerol phosphate synthase (269 aa).

Belongs to the TrpC family.

The catalysed reaction is 1-(2-carboxyphenylamino)-1-deoxy-D-ribulose 5-phosphate + H(+) = (1S,2R)-1-C-(indol-3-yl)glycerol 3-phosphate + CO2 + H2O. It participates in amino-acid biosynthesis; L-tryptophan biosynthesis; L-tryptophan from chorismate: step 4/5. This is Indole-3-glycerol phosphate synthase from Streptomyces griseus subsp. griseus (strain JCM 4626 / CBS 651.72 / NBRC 13350 / KCC S-0626 / ISP 5235).